The sequence spans 380 residues: Transcription factor RF2a (380 aa).

The disordered stretch occupies residues 1-57 (MNREKSPIPGDGGDGLPPQATRRAGPPAAAAAAEYDISRMPDFPTRNPGHRRAHSEI). Positions 16–33 (LPPQATRRAGPPAAAAAA) are enriched in low complexity. The segment at 56-108 (EILSLPEDLDLCAAGGGDGPSLSDENDEELFSMFLDVEKLNSTCGASSEAEAE) is activation of RTBV promoter. A bZIP domain is found at 181–244 (DPKRAKRIWA…SGLTTENSEL (64 aa)). The interval 183-204 (KRAKRIWANRQSAARSKERKMR) is basic motif. The interval 209-244 (LERKVQTLQTEATTLSAQLALLQRDTSGLTTENSEL) is leucine-zipper. The segment at 283-357 (GGMMMNFGGM…AQQLQQAARD (75 aa)) is interaction with TBP2. Residues 326–355 (QAQQQQVLHPQHQQQQPLHPLQAQQLQQAA) show a composition bias toward low complexity. The tract at residues 326–380 (QAQQQQVLHPQHQQQQPLHPLQAQQLQQAARDLKMKSPMGGQSQWGDGKSGSSGN) is disordered.

This sequence belongs to the bZIP family. As to quaternary structure, binds DNA as a homodimer or as a heterodimer with RF2b. The heterodimer binds stronger to DNA than the homodimer. Interacts with TBP2. As to expression, expressed at high levels in levels in leaf sheath, moderate levels in leaf blade, but not in roots. Predominantly expressed in vascular tissues.

The protein localises to the nucleus. In terms of biological role, transcription factor probably involved in vascular development and shoot tissue organization. Binds to the DNA sequence 5'-CCGAGTGTGCCCCTGG-3' present in the promoter region Box II of the phloem-specific rice tungro bacilliform virus (RTBV) promoter. May regulate tissue-specific expression of the RTBV promoter and virus replication. This is Transcription factor RF2a (RF2a) from Oryza sativa subsp. japonica (Rice).